The following is a 476-amino-acid chain: uncharacterized protein (476 aa).

The first 24 residues, 1-24 (MIRKSATGVIVALAVIWGGGTWYT), serve as a signal peptide directing secretion.

It to E.coli YdgA and H.influenzae HI_1236.

This is an uncharacterized protein from Escherichia coli (strain K12).